Reading from the N-terminus, the 942-residue chain is MVLMEDMQNKDGHNTVENSSGGTDSNNNIQMRRMRKTQLSKKELFEKRKSDVLIAAKSLDTEIQNVKNLKRLSIGSMDLVIDPELEFKVNSRNSYSSDSSKESLQESLHEENIIRSEQKEEQGSEDNDAYEEGDATNVDDSIDITQTEYLHDEETLEKEKIIRNASSSTSSSARVTSRNRRLSGVKTLAHDVVLDVENDHDSKMVDLTQNLLWVPADQHPNVKPENYLELIQDTLQNIQISTNQDIDENKLELGNNHVISNRKRTGSVVRRPSRLKTSYTKFDDEPPLADKPQEGEIQVDKRISSSDIKTIRSVSLKEITEELTKISNNAGLTDSDAVTLARSLSMSGSFTNESLHLNGNHTENDNEFASNMFNETGLTIPERSSLRRSKFNTYKIRLEGSSLPQAVKLNSLMNIQTNDNRRSASSPASYTQVPQEQASLNDFHEIFDHYRRTSTDWSTENEKYVDSTNYYSDEEDLTHASISQESSLLSTDSSNNSVLIKPHNTGSMISEKLDQHVSSSEKSNTNNSEANHGWSWLNSSNGSLNANEQTYQQLTDDEDDEECVDNEKADFVNLSVSRRAKSTKRASERINHSKNRHSPIFQIHSEEAKSVVITPSVVSSSESQPSKPTAPAVVEKKVELPTDTQASTHKKNSLEKRLAKLFKRKQHNGTCKSDVKVIKKSVKKELKKKASHSSLSKFRKSPKKKPQEAEVERPSSPTKTITTEDIDTASVIEPEVRSSNASTLLPDSHTSHSSEFVVETISELDGDDSFDISGGDVNYDVEVHSSISRDTTAGLEEDIGAEREDNTSPTAPQISTLPPRKLTFEDVVKPDYSNAPIKFTDSAFGFPLPMITNSTVIMFDHRLGINVERAIYRLSHLKLSDPGRELRQQVLLSNFMYSYLNLVNHTLYMEQVGTGDIAFNGDSALGMMDKNDSDGTILIPDI.

A disordered region spans residues 1-28 (MVLMEDMQNKDGHNTVENSSGGTDSNNN). Over residues 15 to 28 (TVENSSGGTDSNNN) the composition is skewed to polar residues. Ser-50 is modified (phosphoserine). Disordered regions lie at residues 91–142 (SRNS…DDSI), 483–541 (SQES…NSSN), 617–654 (VVSS…KNSL), 682–728 (VKKE…DIDT), and 788–817 (SRDT…ISTL). Positions 99 to 122 (SSKESLQESLHEENIIRSEQKEEQ) are enriched in basic and acidic residues. Over residues 123–134 (GSEDNDAYEEGD) the composition is skewed to acidic residues. Low complexity-rich tracts occupy residues 483–497 (SQES…SNNS), 518–541 (SSSE…NSSN), and 617–627 (VVSSSESQPSK). Positions 682 to 704 (VKKELKKKASHSSLSKFRKSPKK) are enriched in basic residues. Residues 807–816 (TSPTAPQIST) are compositionally biased toward polar residues.

To yeast ZDS1/NRC1/CES1. Interacts with SKG6.

In terms of biological role, acts as a negative regulator of polarized growth via an alternative mechanism to ZDS1. In heat-stressed cells appears to play a role in localizing BCY1 to the cytoplasm. Seems to interact with, and down-regulate, CDC42. Also acts as a suppressor of PKC1. May act as an integration point for distinct signaling pathways helping to maintain a balance among these different pathways. In Saccharomyces cerevisiae (strain ATCC 204508 / S288c) (Baker's yeast), this protein is Protein ZDS2 (ZDS2).